The primary structure comprises 351 residues: GTPase Obg (351 aa).

The Obg domain occupies 1-159 (MKFLDQAKVY…RWIWLRLKLI (159 aa)). In terms of domain architecture, OBG-type G spans 160–328 (ADVGLVGLPN…LCGSAWDIVL (169 aa)). Residues 166–173 (GLPNAGKS), 191–195 (FTTLY), 213–216 (DIPG), 280–283 (NKID), and 309–311 (SGV) contribute to the GTP site. Mg(2+) is bound by residues Ser-173 and Thr-193.

It belongs to the TRAFAC class OBG-HflX-like GTPase superfamily. OBG GTPase family. In terms of assembly, monomer. The cofactor is Mg(2+).

It localises to the cytoplasm. Its function is as follows. An essential GTPase which binds GTP, GDP and possibly (p)ppGpp with moderate affinity, with high nucleotide exchange rates and a fairly low GTP hydrolysis rate. Plays a role in control of the cell cycle, stress response, ribosome biogenesis and in those bacteria that undergo differentiation, in morphogenesis control. The sequence is that of GTPase Obg from Maricaulis maris (strain MCS10) (Caulobacter maris).